The chain runs to 518 residues: Membrane-bound lytic murein transglycosylase F (518 aa).

A signal peptide spans 1-21; that stretch reads MKKLKINYLFIGILALLLAVA. Residues 22 to 269 form a non-LT domain region; the sequence is LWPSIPWFGK…RIEEKYLGHG (248 aa). An LT domain region spans residues 270–518; it reads DDFDYVDTRT…SRKGSEEKQN (249 aa). Glu-314 is a catalytic residue.

The protein in the N-terminal section; belongs to the bacterial solute-binding protein 3 family. This sequence in the C-terminal section; belongs to the transglycosylase Slt family.

The protein localises to the cell outer membrane. It catalyses the reaction Exolytic cleavage of the (1-&gt;4)-beta-glycosidic linkage between N-acetylmuramic acid (MurNAc) and N-acetylglucosamine (GlcNAc) residues in peptidoglycan, from either the reducing or the non-reducing ends of the peptidoglycan chains, with concomitant formation of a 1,6-anhydrobond in the MurNAc residue.. Its function is as follows. Murein-degrading enzyme that degrades murein glycan strands and insoluble, high-molecular weight murein sacculi, with the concomitant formation of a 1,6-anhydromuramoyl product. Lytic transglycosylases (LTs) play an integral role in the metabolism of the peptidoglycan (PG) sacculus. Their lytic action creates space within the PG sacculus to allow for its expansion as well as for the insertion of various structures such as secretion systems and flagella. The protein is Membrane-bound lytic murein transglycosylase F of Shigella sonnei (strain Ss046).